The sequence spans 120 residues: Secreted RxLR effector protein RXLR-C26 (120 aa).

The first 29 residues, 1-29, serve as a signal peptide directing secretion; the sequence is MTGILCFPPFARFFMLLSGCAWLAGVSSG. The RxLR-dEER signature appears at 57–77; it reads RNLRGHINSAIIEANDTSEER. An N-linked (GlcNAc...) asparagine glycan is attached at Asn-71.

Belongs to the RxLR effector family.

The protein resides in the secreted. It localises to the host cytoplasm. Its subcellular location is the host nucleus. In terms of biological role, secreted effector that does not suppress pattern-triggered immunity (PTI) in plant host. The protein is Secreted RxLR effector protein RXLR-C26 of Plasmopara halstedii (Downy mildew of sunflower).